The following is a 316-amino-acid chain: uncharacterized protein (316 aa).

4 BNR repeats span residues Phe-62–Pro-73, Lys-124–Asn-135, Phe-196–Val-207, and Tyr-242–Gln-253.

This is an uncharacterized protein from Saccharomyces cerevisiae (strain ATCC 204508 / S288c) (Baker's yeast).